The following is a 230-amino-acid chain: 7-cyano-7-deazaguanine synthase (230 aa).

7-17 (CSGGLDSVSLA) is an ATP binding site. 4 residues coordinate Zn(2+): cysteine 185, cysteine 193, cysteine 196, and cysteine 199.

Belongs to the QueC family. Zn(2+) is required as a cofactor.

The catalysed reaction is 7-carboxy-7-deazaguanine + NH4(+) + ATP = 7-cyano-7-deazaguanine + ADP + phosphate + H2O + H(+). Its pathway is purine metabolism; 7-cyano-7-deazaguanine biosynthesis. Functionally, catalyzes the ATP-dependent conversion of 7-carboxy-7-deazaguanine (CDG) to 7-cyano-7-deazaguanine (preQ(0)). The sequence is that of 7-cyano-7-deazaguanine synthase from Ruegeria pomeroyi (strain ATCC 700808 / DSM 15171 / DSS-3) (Silicibacter pomeroyi).